Here is a 644-residue protein sequence, read N- to C-terminus: 1-deoxy-D-xylulose-5-phosphate synthase (644 aa).

Thiamine diphosphate is bound by residues His-72 and 113–115 (GHA). Asp-144 serves as a coordination point for Mg(2+). Thiamine diphosphate-binding positions include 145 to 146 (GA), Asn-174, Tyr-287, and Glu-370. Position 174 (Asn-174) interacts with Mg(2+).

This sequence belongs to the transketolase family. DXPS subfamily. As to quaternary structure, homodimer. Requires Mg(2+) as cofactor. The cofactor is thiamine diphosphate.

It carries out the reaction D-glyceraldehyde 3-phosphate + pyruvate + H(+) = 1-deoxy-D-xylulose 5-phosphate + CO2. It participates in metabolic intermediate biosynthesis; 1-deoxy-D-xylulose 5-phosphate biosynthesis; 1-deoxy-D-xylulose 5-phosphate from D-glyceraldehyde 3-phosphate and pyruvate: step 1/1. Its function is as follows. Catalyzes the acyloin condensation reaction between C atoms 2 and 3 of pyruvate and glyceraldehyde 3-phosphate to yield 1-deoxy-D-xylulose-5-phosphate (DXP). This is 1-deoxy-D-xylulose-5-phosphate synthase from Prochlorococcus marinus (strain MIT 9313).